The chain runs to 401 residues: 4-hydroxy-3-methylbut-2-enyl diphosphate reductase (401 aa).

Position 66 (cysteine 66) interacts with [4Fe-4S] cluster. Position 96 (histidine 96) interacts with (2E)-4-hydroxy-3-methylbut-2-enyl diphosphate. Histidine 96 provides a ligand contact to dimethylallyl diphosphate. Histidine 96 serves as a coordination point for isopentenyl diphosphate. Cysteine 157 lines the [4Fe-4S] cluster pocket. Residue histidine 185 participates in (2E)-4-hydroxy-3-methylbut-2-enyl diphosphate binding. Histidine 185 provides a ligand contact to dimethylallyl diphosphate. An isopentenyl diphosphate-binding site is contributed by histidine 185. Glutamate 187 (proton donor) is an active-site residue. Threonine 250 is a binding site for (2E)-4-hydroxy-3-methylbut-2-enyl diphosphate. Cysteine 288 contributes to the [4Fe-4S] cluster binding site. (2E)-4-hydroxy-3-methylbut-2-enyl diphosphate is bound by residues serine 317, serine 318, asparagine 319, and serine 379. The dimethylallyl diphosphate site is built by serine 317, serine 318, asparagine 319, and serine 379. Isopentenyl diphosphate contacts are provided by serine 317, serine 318, asparagine 319, and serine 379.

Belongs to the IspH family. It depends on [4Fe-4S] cluster as a cofactor.

It catalyses the reaction isopentenyl diphosphate + 2 oxidized [2Fe-2S]-[ferredoxin] + H2O = (2E)-4-hydroxy-3-methylbut-2-enyl diphosphate + 2 reduced [2Fe-2S]-[ferredoxin] + 2 H(+). It carries out the reaction dimethylallyl diphosphate + 2 oxidized [2Fe-2S]-[ferredoxin] + H2O = (2E)-4-hydroxy-3-methylbut-2-enyl diphosphate + 2 reduced [2Fe-2S]-[ferredoxin] + 2 H(+). Its pathway is isoprenoid biosynthesis; dimethylallyl diphosphate biosynthesis; dimethylallyl diphosphate from (2E)-4-hydroxy-3-methylbutenyl diphosphate: step 1/1. The protein operates within isoprenoid biosynthesis; isopentenyl diphosphate biosynthesis via DXP pathway; isopentenyl diphosphate from 1-deoxy-D-xylulose 5-phosphate: step 6/6. Functionally, catalyzes the conversion of 1-hydroxy-2-methyl-2-(E)-butenyl 4-diphosphate (HMBPP) into a mixture of isopentenyl diphosphate (IPP) and dimethylallyl diphosphate (DMAPP). Acts in the terminal step of the DOXP/MEP pathway for isoprenoid precursor biosynthesis. The protein is 4-hydroxy-3-methylbut-2-enyl diphosphate reductase of Trichodesmium erythraeum (strain IMS101).